The sequence spans 628 residues: FAD-linked oxidoreductase hmp9 (628 aa).

An N-terminal signal peptide occupies residues 1-29 (MFCIIRAQLLLLLHLLVLALLLVGTVCNA). The disordered stretch occupies residues 34–53 (GHPSELEPLALKRGGSPRDD). 2 N-linked (GlcNAc...) asparagine glycosylation sites follow: N80 and N133. The FAD-binding PCMH-type domain maps to 152 to 337 (LGQLPVYAID…LKTKIKAYPN (186 aa)). N356 is a glycosylation site (N-linked (GlcNAc...) asparagine).

It belongs to the oxygen-dependent FAD-linked oxidoreductase family.

It functions in the pathway secondary metabolite biosynthesis. In terms of biological role, FAD-linked oxidoreductase; part of the gene cluster that mediates the biosynthesis of hypothemycin, a resorcylic acid lactone (RAL) that irreversibly inhibits a subset of protein kinases with a conserved cysteine in the ATP binding site such as human ERK2. The first step is performed by both PKSs hmp3 and hmp8 and leads to the production of 7',8'-dehydrozearalenol (DHZ). The highly reducing PKS hpm8 synthesizes the reduced hexaketide (7S,11S,2E,8E)-7,11-dihydroxy-dodeca-2,8-dienoate, which is transferred downstream to the non-reducing PKS hpm3. Hpm3 then extends the reduced hexaketide to a nonaketide, after which regioselective cyclization and macrolactonization affords DHZ. The next step is the conversion of DHZ into aigialomycin C and is performed by the O-methyltransferase hmp5, the FAD-binding monooxygenase hmp7, and the cytochrome P450 monooxygenase hmp1. The wide substrate tolerance of the hmp5 and hmp7 implies that the reactions from DHZ to aigialomycin C can occur in any order. The steps from aigialomycin C to hypothemycin are less well established. The FAD-linked oxidoreductase hmp9 presumably catalyzes oxidation of the C-6' hydroxyl to a ketone. The timing of this oxidation is important, since the resulting enone functional group is a Michael acceptor that can react spontaneously with glutathione, an abundant metabolite in fungal cells. The glutathione S-transferase hmp2 catalyzes cis-trans isomerization of the 7',8' double bond with equilibrium favoring the trans isomer. The hpm6-encoded transporter might preferentially pump hypothemycin out of the cell relative to the trans isomer aigialomycin A. The cis-to-trans isomerization may be coupled with C-4' hydroxylation, since all known hypothemycin analogs containing the enone functional group also have hydroxyl groups at both C-4' and C-5'. The sequence is that of FAD-linked oxidoreductase hmp9 from Hypomyces subiculosus (Nectria subiculosa).